The sequence spans 190 residues: Adenylate kinase (190 aa).

11 to 16 provides a ligand contact to ATP; that stretch reads GSGKGT. Residues 31-60 are NMP; that stretch reads STGDVLRGEMKAETELGKIAKDYIEKGQLV. AMP contacts are provided by residues Thr-32, Arg-37, 58 to 60, 86 to 89, and Gln-93; these read QLV and GFPR. An LID region spans residues 127–137; the sequence is ERGKVSGRSDD. Arg-128 contacts ATP. AMP contacts are provided by Arg-134 and Arg-145. Residue Gly-173 participates in ATP binding.

The protein belongs to the adenylate kinase family. In terms of assembly, monomer.

Its subcellular location is the cytoplasm. It carries out the reaction AMP + ATP = 2 ADP. Its pathway is purine metabolism; AMP biosynthesis via salvage pathway; AMP from ADP: step 1/1. In terms of biological role, catalyzes the reversible transfer of the terminal phosphate group between ATP and AMP. Plays an important role in cellular energy homeostasis and in adenine nucleotide metabolism. This Parabacteroides distasonis (strain ATCC 8503 / DSM 20701 / CIP 104284 / JCM 5825 / NCTC 11152) protein is Adenylate kinase.